A 944-amino-acid chain; its full sequence is Protein unc-45 homolog A (944 aa).

Residues 1-25 (MTVSGPETPEPRPSDPGASSAEQLR) form a disordered region. TPR repeat units lie at residues 21–54 (AEQLRKEGNELFKCGDYEGALTAYTQALSLGATP), 58–91 (AILHRNRAACHLKLEDYSKAESEASKAIEKDGGD), and 92–125 (VKALYRRSQALEKLGRLDQAVLDLKRCVSLEPKN). K70 carries the post-translational modification N6-acetyllysine. N6-acetyllysine is present on K483.

In terms of assembly, interacts with PGR isoforms A and B as well as with NR3C1 in the absence of ligand, and with HSP90AB1. Binding to HSP90AB1 involves 2 UNC45A monomers per HSP90AB1 dimer. As to expression, detected in spleen, bone marrow, lung and ovary, and at lower levels in testis, kidney, heart and brain (at protein level). Ubiquitous. Detected in uterus, large intestine, kidney, spleen, lung, brain, liver and ovary.

Its subcellular location is the cytoplasm. It localises to the perinuclear region. It is found in the nucleus. In terms of biological role, may act as co-chaperone for HSP90 (Potential). Prevents the stimulation of HSP90AB1 ATPase activity by AHSA1. Positive factor in promoting PGR function in the cell. May be necessary for proper folding of myosin (Potential). Necessary for normal cell proliferation. Necessary for normal myotube formation and myosin accumulation during muscle cell development. May play a role in erythropoiesis in stroma cells in the spleen. This chain is Protein unc-45 homolog A (Unc45a), found in Mus musculus (Mouse).